Here is a 508-residue protein sequence, read N- to C-terminus: MKKKNIYSIRKLGVGIASVTLGTLLISGGVTPAANAAQHDEAQQNAFYQVLNMPNLNADQRNGFIQSLKDDPSQSANVLGEAQKLNDSQAPKADAQQNNFNKDQQSAFYEILNMPNLNEAQRNGFIQSLKDDPSQSTNVLGEAKKLNESQAPKADNNFNKEQQNAFYEILNMPNLNEEQRNGFIQSLKDDPSQSANLLSEAKKLNESQAPKADNKFNKEQQNAFYEILHLPNLNEEQRNGFIQSLKDDPSQSANLLAEAKKLNDAQAPKADNKFNKEQQNAFYEILHLPNLTEEQRNGFIQSLKDDPSVSKEILAEAKKLNDAQAPKEEDNNKPGKEDNNKPGKEDNNKPGKEDNNKPGKEDGNKPGKEDNKKPGKEDGNKPGKEDNKKPGKEDGNKPGKEDGNKPGKEDGNGVHVVKPGDTVNDIAKANGTTADKIAADNKLADKNMIKPGQELVVDKKQPANHADANKAQALPETGEENPFIGTTVFGGLSLALGAALLAGRRREL.

The signal sequence occupies residues 1–36 (MKKKNIYSIRKLGVGIASVTLGTLLISGGVTPAANA). The short motif at 7 to 18 (YSIRKLGVGIAS) is the YSIRK-G/S signaling motif element. The Immunoglobulin-binding region E repeat unit spans residues 37 to 92 (AQHDEAQQNAFYQVLNMPNLNADQRNGFIQSLKDDPSQSANVLGEAQKLNDSQAPK). An Immunoglobulin-binding region D repeat occupies 93 to 153 (ADAQQNNFNK…KKLNESQAPK (61 aa)). Residues 154 to 211 (ADNNFNKEQQNAFYEILNMPNLNEEQRNGFIQSLKDDPSQSANLLSEAKKLNESQAPK) form an Immunoglobulin-binding region A repeat. Residues 212 to 269 (ADNKFNKEQQNAFYEILHLPNLNEEQRNGFIQSLKDDPSQSANLLAEAKKLNDAQAPK) form an Immunoglobulin-binding region B repeat. The Immunoglobulin-binding region C repeat unit spans residues 270 to 327 (ADNKFNKEQQNAFYEILHLPNLTEEQRNGFIQSLKDDPSVSKEILAEAKKLNDAQAPK). Residues 318-412 (KKLNDAQAPK…GNKPGKEDGN (95 aa)) are compositionally biased toward basic and acidic residues. Disordered regions lie at residues 318–421 (KKLN…KPGD) and 459–479 (KKQPANHADANKAQALPETGE). A run of 10 repeats spans residues 333 to 340 (KPGKEDNN), 341 to 348 (KPGKEDNN), 349 to 356 (KPGKEDNN), 357 to 364 (KPGKEDGN), 365 to 372 (KPGKEDNK), 373 to 380 (KPGKEDGN), 381 to 388 (KPGKEDNK), 389 to 396 (KPGKEDGN), 397 to 404 (KPGKEDGN), and 405 to 412 (KPGKEDGN). Residues 333–412 (KPGKEDNNKP…GNKPGKEDGN (80 aa)) form a 10 X 8 AA approximate tandem repeats region. Residues 413-457 (GVHVVKPGDTVNDIAKANGTTADKIAADNKLADKNMIKPGQELVV) enclose the LysM domain. The LPXTG sorting signal motif lies at 474-478 (LPETG). Thr-477 is modified (pentaglycyl murein peptidoglycan amidated threonine). Positions 478-508 (GEENPFIGTTVFGGLSLALGAALLAGRRREL) are cleaved as a propeptide — removed by sortase.

It belongs to the immunoglobulin-binding protein SpA family. Interacts with host TNFRSF1A; this interaction leads to the stimulation of both surface expression and shedding of TNFRSF1A.

Its subcellular location is the secreted. The protein localises to the cell wall. Functionally, plays a role in the inhibition of the host innate and adaptive immune responses. Possesses five immunoglobulin-binding domains that capture both the fragment crystallizable region (Fc region) and the Fab region (part of Ig that identifies antigen) of immunoglobulins. In turn, Staphylococcus aureus is protected from phagocytic killing via inhibition of Ig Fc region. In addition, the host elicited B-cell response is prevented due to a decrease of antibody-secreting cell proliferation that enter the bone marrow, thereby decreasing long-term antibody production. Inhibits osteogenesis by preventing osteoblast proliferation and expression of alkaline phosphatase, type I collagen, osteopontin and osteocalcin. Acts directly as a pro-inflammatory factor in the lung through its ability to bind and activate tumor necrosis factor alpha receptor 1/TNFRSF1A. The chain is Immunoglobulin G-binding protein A (spa) from Staphylococcus aureus (strain Newman).